A 150-amino-acid polypeptide reads, in one-letter code: MADKFHILVLNGPNLNMLGTREPEKYGSLTLSEIVNRLSTEATSLNVELDHFQSNAEYAIIDRIHQAKDTVDYILINPAAFTHTSVAIRDALLAVSIPFIEIHLSNVHAREPFRHHSYLSDIAAGVICGLGADGYSYALQTAVKRLSQSH.

Tyr26 acts as the Proton acceptor in catalysis. Asn77, His83, and Asp90 together coordinate substrate. His103 acts as the Proton donor in catalysis. Substrate-binding positions include 104–105 and Arg114; that span reads LS.

The protein belongs to the type-II 3-dehydroquinase family. Homododecamer.

It catalyses the reaction 3-dehydroquinate = 3-dehydroshikimate + H2O. Its pathway is metabolic intermediate biosynthesis; chorismate biosynthesis; chorismate from D-erythrose 4-phosphate and phosphoenolpyruvate: step 3/7. Catalyzes a trans-dehydration via an enolate intermediate. The chain is 3-dehydroquinate dehydratase from Enterobacter sp. (strain 638).